A 74-amino-acid chain; its full sequence is MQLFVRAQELHTLEVTGQETVAQIKAHVASLEGIAPEDQVLLLAGTPLEDEATLGQCGVEALSTLEVAGRMLGG.

It belongs to the ubiquitin family.

This Bos taurus (Bovine) protein is Ubiquitin-like protein FUBI (FAU).